The following is a 152-amino-acid chain: Isoquinoline 1-oxidoreductase subunit alpha (152 aa).

The region spanning 1–77 (MIEFILNGQP…RQSVTTIEGL (77 aa)) is the 2Fe-2S ferredoxin-type domain. 3 residues coordinate [2Fe-2S] cluster: C39, C44, and C47.

In terms of assembly, heterodimer of an alpha chain and a beta chain.

It catalyses the reaction isoquinoline + A + H2O = isoquinolin-1(2H)-one + AH2. Its function is as follows. Specific towards N-containing N-heterocyclic substrates, including isoquinoline, isoquinolin-5-ol, phthalazine and quinazoline. The protein is Isoquinoline 1-oxidoreductase subunit alpha (iorA) of Brevundimonas diminuta (Pseudomonas diminuta).